The chain runs to 167 residues: NAD(P)H-quinone oxidoreductase subunit I, chloroplastic (167 aa).

2 4Fe-4S ferredoxin-type domains span residues 55–84 (GRIHFEFDKCIACEVCVRVCPIDLPVVDWK) and 95–124 (LNYSIDFGICIFCGNCVEYCPTNCLSMTEE). [4Fe-4S] cluster-binding residues include cysteine 64, cysteine 67, cysteine 70, cysteine 74, cysteine 104, cysteine 107, cysteine 110, and cysteine 114.

Belongs to the complex I 23 kDa subunit family. As to quaternary structure, NDH is composed of at least 16 different subunits, 5 of which are encoded in the nucleus. [4Fe-4S] cluster is required as a cofactor.

It localises to the plastid. The protein resides in the chloroplast thylakoid membrane. It catalyses the reaction a plastoquinone + NADH + (n+1) H(+)(in) = a plastoquinol + NAD(+) + n H(+)(out). The enzyme catalyses a plastoquinone + NADPH + (n+1) H(+)(in) = a plastoquinol + NADP(+) + n H(+)(out). Its function is as follows. NDH shuttles electrons from NAD(P)H:plastoquinone, via FMN and iron-sulfur (Fe-S) centers, to quinones in the photosynthetic chain and possibly in a chloroplast respiratory chain. The immediate electron acceptor for the enzyme in this species is believed to be plastoquinone. Couples the redox reaction to proton translocation, and thus conserves the redox energy in a proton gradient. The protein is NAD(P)H-quinone oxidoreductase subunit I, chloroplastic of Morus indica (Mulberry).